A 1099-amino-acid chain; its full sequence is Sterol regulatory element-binding protein 2 (1099 aa).

Residues 1–47 (MDASEFMDTMDPSLSELGDEFTLGDIDEMLQFVSNQVDFPDIFEDQM) are transcriptional activation (acidic). Residues 1 to 461 (MDASEFMDTM…SCVGVMDRSR (461 aa)) lie on the Cytoplasmic side of the membrane. Residues 65 to 107 (LTPPHTPVQTSSQTHTQTLTQAHTQTHTQTHTQTRTPPVLQPR) are disordered. Low complexity predominate over residues 71-100 (PVQTSSQTHTQTLTQAHTQTHTQTHTQTRT). One can recognise a bHLH domain in the interval 320-370 (ERRTTHNIIEKRYRSSINDKILELRDLVLGNDAKMHKSGVLRKAIDYIKYL). The interval 370–391 (LQQVNHKLRQENLTLKMANQKN) is leucine-zipper. Residues 462-482 (LLLCALSFLCLSLNPLPSLLG) form a helical membrane-spanning segment. Over 483-513 (AEAPAGSPEVAGHGPTRTLFSLPAQTQSFGA) the chain is Lumenal. The chain crosses the membrane as a helical span at residues 514 to 534 (WLWCVLPFLLVWVVSGVGVVW). Residues 535–1099 (GCVRVLYLWE…LSGGTTIAAS (565 aa)) lie on the Cytoplasmic side of the membrane.

The protein belongs to the SREBP family. As to quaternary structure, forms a tight complex with scap, the SCAP-SREBP complex, in the endoplasmic reticulum membrane. In terms of assembly, homodimer; efficient DNA binding of the soluble transcription factor fragment requires dimerization with another bHLH protein. Processed in the Golgi apparatus, releasing the protein from the membrane. At low cholesterol the SCAP-SREBP complex is recruited into COPII vesicles for export from the endoplasmic reticulum. In the Golgi, complex SREBPs are cleaved sequentially by site-1 (mbtps1, S1P) and site-2 (mbtps2, S2P) protease. The first cleavage by site-1 protease occurs within the luminal loop, the second cleavage by site-2 protease occurs within the first transmembrane domain, releasing the transcription factor from the Golgi membrane.

Its subcellular location is the endoplasmic reticulum membrane. It is found in the golgi apparatus membrane. It localises to the cytoplasmic vesicle. The protein resides in the COPII-coated vesicle membrane. The protein localises to the nucleus. Functionally, precursor of the transcription factor form (Processed sterol regulatory element-binding protein 2), which is embedded in the endoplasmic reticulum membrane. Low sterol concentrations promote processing of this form, releasing the transcription factor form that translocates into the nucleus and activates transcription of genes involved in cholesterol biosynthesis. Its function is as follows. Key transcription factor that regulates expression of genes involved in cholesterol biosynthesis. Binds to the sterol regulatory element 1 (SRE-1) (5'-ATCACCCCAC-3'). Has dual sequence specificity binding to both an E-box motif (5'-ATCACGTGA-3') and to SRE-1 (5'-ATCACCCCAC-3'). Regulates transcription of genes related to cholesterol synthesis pathway. Activated by mediated cholesterol efflux, transactivates NOTCH and promotes hematopoietic stem and progenitor cell emergence. The polypeptide is Sterol regulatory element-binding protein 2 (Danio rerio (Zebrafish)).